A 156-amino-acid chain; its full sequence is Ribosomal RNA large subunit methyltransferase H (156 aa).

S-adenosyl-L-methionine contacts are provided by residues Gly104 and 123–128 (LSALTL).

This sequence belongs to the RNA methyltransferase RlmH family. As to quaternary structure, homodimer.

It is found in the cytoplasm. It carries out the reaction pseudouridine(1915) in 23S rRNA + S-adenosyl-L-methionine = N(3)-methylpseudouridine(1915) in 23S rRNA + S-adenosyl-L-homocysteine + H(+). In terms of biological role, specifically methylates the pseudouridine at position 1915 (m3Psi1915) in 23S rRNA. The sequence is that of Ribosomal RNA large subunit methyltransferase H from Nitrosospira multiformis (strain ATCC 25196 / NCIMB 11849 / C 71).